The primary structure comprises 74 residues: Cell division protein ZapB (74 aa).

Residues 2 to 74 adopt a coiled-coil conformation; that stretch reads TLDLLEQLES…LVGKIEETES (73 aa).

This sequence belongs to the ZapB family. In terms of assembly, homodimer. The ends of the coiled-coil dimer bind to each other, forming polymers. Interacts with FtsZ.

Its subcellular location is the cytoplasm. In terms of biological role, non-essential, abundant cell division factor that is required for proper Z-ring formation. It is recruited early to the divisome by direct interaction with FtsZ, stimulating Z-ring assembly and thereby promoting cell division earlier in the cell cycle. Its recruitment to the Z-ring requires functional FtsA or ZipA. This is Cell division protein ZapB from Psychromonas ingrahamii (strain DSM 17664 / CCUG 51855 / 37).